The chain runs to 243 residues: Probable septum site-determining protein MinC (243 aa).

Belongs to the MinC family. Interacts with MinD and FtsZ.

In terms of biological role, cell division inhibitor that blocks the formation of polar Z ring septums. Rapidly oscillates between the poles of the cell to destabilize FtsZ filaments that have formed before they mature into polar Z rings. Prevents FtsZ polymerization. This Agathobacter rectalis (strain ATCC 33656 / DSM 3377 / JCM 17463 / KCTC 5835 / VPI 0990) (Eubacterium rectale) protein is Probable septum site-determining protein MinC.